Reading from the N-terminus, the 206-residue chain is TPR repeat-containing protein YrrB (206 aa).

6 TPR repeats span residues Met1–Asp23, Ala24–Ala57, Thr59–Asn91, Asp93–Asp125, Glu127–His159, and Ala160–His193.

As to quaternary structure, monomer.

Functionally, could be an interacting mediator in the complex formation among RNA sulfuration components, RNA processing components, and aminoacyl-tRNA synthetases. This chain is TPR repeat-containing protein YrrB (yrrB), found in Bacillus subtilis (strain 168).